Reading from the N-terminus, the 339-residue chain is Serine/threonine-protein kinase pdik1l-A (339 aa).

In terms of domain architecture, Protein kinase spans 8-332 (YDLIREVGRG…LELKLIQIAF (325 aa)). ATP-binding positions include 14 to 22 (VGRGSYGVV) and Lys37. Asp164 acts as the Proton acceptor in catalysis.

This sequence belongs to the protein kinase superfamily. Ser/Thr protein kinase family.

It is found in the nucleus. It catalyses the reaction L-seryl-[protein] + ATP = O-phospho-L-seryl-[protein] + ADP + H(+). The catalysed reaction is L-threonyl-[protein] + ATP = O-phospho-L-threonyl-[protein] + ADP + H(+). This Xenopus laevis (African clawed frog) protein is Serine/threonine-protein kinase pdik1l-A (pdik1-a).